The chain runs to 428 residues: Dihydroorotase (428 aa).

Residues H59 and H61 each contribute to the Zn(2+) site. Substrate-binding positions include 61-63 (HLR) and N93. Zn(2+)-binding residues include D151, H178, and H231. N277 lines the substrate pocket. D304 lines the Zn(2+) pocket. Residue D304 is part of the active site. Substrate contacts are provided by residues H308 and 322-323 (FG).

This sequence belongs to the metallo-dependent hydrolases superfamily. DHOase family. Class I DHOase subfamily. Requires Zn(2+) as cofactor.

The catalysed reaction is (S)-dihydroorotate + H2O = N-carbamoyl-L-aspartate + H(+). It functions in the pathway pyrimidine metabolism; UMP biosynthesis via de novo pathway; (S)-dihydroorotate from bicarbonate: step 3/3. Its function is as follows. Catalyzes the reversible cyclization of carbamoyl aspartate to dihydroorotate. The protein is Dihydroorotase of Halalkalibacterium halodurans (strain ATCC BAA-125 / DSM 18197 / FERM 7344 / JCM 9153 / C-125) (Bacillus halodurans).